A 45-amino-acid polypeptide reads, in one-letter code: Large ribosomal subunit protein bL34 (45 aa).

Residues 22–45 (RMRTKSGQNVIKARRRKGRARLTV) form a disordered region. A compositionally biased stretch (basic residues) spans 33–45 (KARRRKGRARLTV).

It belongs to the bacterial ribosomal protein bL34 family.

This chain is Large ribosomal subunit protein bL34, found in Thermosynechococcus vestitus (strain NIES-2133 / IAM M-273 / BP-1).